Consider the following 338-residue polypeptide: Phenylalanine--tRNA ligase alpha subunit (338 aa).

Residue Glu253 coordinates Mg(2+).

Belongs to the class-II aminoacyl-tRNA synthetase family. Phe-tRNA synthetase alpha subunit type 1 subfamily. As to quaternary structure, tetramer of two alpha and two beta subunits. The cofactor is Mg(2+).

It localises to the cytoplasm. It catalyses the reaction tRNA(Phe) + L-phenylalanine + ATP = L-phenylalanyl-tRNA(Phe) + AMP + diphosphate + H(+). The chain is Phenylalanine--tRNA ligase alpha subunit from Legionella pneumophila (strain Lens).